The following is a 389-amino-acid chain: Probable serine/threonine-protein kinase PBL11 (389 aa).

Residue G2 is the site of N-myristoyl glycine attachment. C4 carries the S-palmitoyl cysteine lipid modification. Residues 68–353 (FRPDSVVGEG…NEIVKTMEEL (286 aa)) enclose the Protein kinase domain. Residues 74–82 (VGEGGFGCV) and K106 each bind ATP. The residue at position 151 (Y151) is a Phosphotyrosine. The active-site Proton acceptor is D203. Phosphoserine is present on residues S207 and S237. Phosphothreonine occurs at positions 238 and 243. Phosphotyrosine is present on Y251.

Belongs to the protein kinase superfamily. Ser/Thr protein kinase family. In terms of tissue distribution, roots, leaves and stems.

It localises to the cell membrane. The catalysed reaction is L-seryl-[protein] + ATP = O-phospho-L-seryl-[protein] + ADP + H(+). It carries out the reaction L-threonyl-[protein] + ATP = O-phospho-L-threonyl-[protein] + ADP + H(+). In terms of biological role, may play a role in the regulation of plant growth and development. May be involved in plant defense signaling. This Arabidopsis thaliana (Mouse-ear cress) protein is Probable serine/threonine-protein kinase PBL11.